The chain runs to 376 residues: D-alanine--D-alanine ligase (376 aa).

The region spanning 150 to 358 is the ATP-grasp domain; it reads KIIFEKEGLP…YSELINKLIE (209 aa). Residue 183–238 coordinates ATP; it reads EGRLTYPCFVKPSNAGSSVGVNKASDRESLVKALNIAAKNDRRILVEEFINGREIE. Residues aspartate 311, glutamate 325, and asparagine 327 each coordinate Mg(2+).

Belongs to the D-alanine--D-alanine ligase family. It depends on Mg(2+) as a cofactor. Requires Mn(2+) as cofactor.

Its subcellular location is the cytoplasm. The catalysed reaction is 2 D-alanine + ATP = D-alanyl-D-alanine + ADP + phosphate + H(+). The protein operates within cell wall biogenesis; peptidoglycan biosynthesis. Cell wall formation. The protein is D-alanine--D-alanine ligase of Ruminiclostridium cellulolyticum (strain ATCC 35319 / DSM 5812 / JCM 6584 / H10) (Clostridium cellulolyticum).